Here is a 122-residue protein sequence, read N- to C-terminus: Large ribosomal subunit protein uL14 (122 aa).

It belongs to the universal ribosomal protein uL14 family. As to quaternary structure, part of the 50S ribosomal subunit. Forms a cluster with proteins L3 and L19. In the 70S ribosome, L14 and L19 interact and together make contacts with the 16S rRNA in bridges B5 and B8.

Functionally, binds to 23S rRNA. Forms part of two intersubunit bridges in the 70S ribosome. The polypeptide is Large ribosomal subunit protein uL14 (Pediococcus pentosaceus (strain ATCC 25745 / CCUG 21536 / LMG 10740 / 183-1w)).